Consider the following 1080-residue polypeptide: AP-4 complex subunit epsilon (1080 aa).

HEAT repeat units lie at residues 161–198 (DTIP…LVGD), 201–238 (LDDD…KHST), 369–405 (QLIE…KVSP), 406–443 (KLVL…QTNV), and 445–479 (PVCS…KYSP). 4 disordered regions span residues 711-782 (TPLV…FPQQ), 801-920 (NNNS…NIDP), 933-973 (FSEN…INNN), and 996-1027 (TNNS…NNNL). Low complexity-rich tracts occupy residues 762-782 (QQQQ…FPQQ), 801-847 (NNNS…PNNQ), 878-911 (NKQT…IQKH), 936-952 (NNNR…NQNN), and 962-972 (KKSNNENNINN).

The protein belongs to the adaptor complexes large subunit family. As to quaternary structure, may be part of the adaptor protein complex 4 (AP-4), a heterotetramer composed of two large adaptins (epsilon-type subunitand beta-type subunit), a medium adaptin (mu-type subunit) and a small adaptin (sigma-type).

The protein localises to the golgi apparatus. It localises to the trans-Golgi network membrane. In terms of biological role, probable component of an adaptor protein complex. Adaptor protein complexes are vesicle coat components involved both in vesicle formation and cargo selection. They control the vesicular transport of proteins in different trafficking pathways. This is AP-4 complex subunit epsilon from Dictyostelium discoideum (Social amoeba).